We begin with the raw amino-acid sequence, 334 residues long: Cathepsin L2 (334 aa).

Residues 1–17 (MNLSLVLAAFCLGIASA) form the signal peptide. A propeptide spans 18–113 (VPKFDQNLDT…KVFREPLFLD (96 aa)) (activation peptide). 2 cysteine pairs are disulfide-bonded: C135–C178 and C169–C211. Residue C138 is part of the active site. The N-linked (GlcNAc...) asparagine glycan is linked to N221. C270 and C323 form a disulfide bridge. The active site involves H277. N292 carries an N-linked (GlcNAc...) asparagine glycan. Residue N301 is part of the active site.

This sequence belongs to the peptidase C1 family. Predominantly expressed in the thymus and testis. Also expressed in corneal epithelium, and to a lesser extent in conjunctival epithelium and skin.

It localises to the lysosome. The enzyme catalyses The recombinant enzyme hydrolyzes proteins (serum albumin, collagen) and synthetic substrates (Z-Phe-Arg-NHMec &gt; Z-Leu-Arg-NHMec &gt; Z-Val-Arg-NHMec).. With respect to regulation, inhibited by CST6. Cysteine protease. May have an important role in corneal physiology. The sequence is that of Cathepsin L2 (CTSV) from Homo sapiens (Human).